Reading from the N-terminus, the 359-residue chain is Probable 2-oxoacid dependent dioxygenase (359 aa).

In terms of domain architecture, Fe2OG dioxygenase spans 207-308 (KGLWMLCHCF…ISVACFFVHT (102 aa)). Positions 231, 233, and 287 each coordinate Fe cation. Residues 329-359 (PPKYRDTTSESSNHYVARKPNGNSSLDHLRI) are disordered. Polar residues predominate over residues 349-359 (NGNSSLDHLRI).

Belongs to the iron/ascorbate-dependent oxidoreductase family. Requires Fe(2+) as cofactor. As to expression, expressed in leaves and seeds. All cultivars with seed-only-functional allele have low to non-detectable GSL-OH expression in the leaves.

The catalysed reaction is gluconapin + AH2 + O2 = progoitrin + A + H2O. Functionally, necessary for the hydroxylation of but-3-enyl glucosinolate to 2-hydroxybut-3-enyl glucosinolate, which is toxic to insects, bacteria and nematodes, inhibits seed germination and produces bitter flavors. The protein is Probable 2-oxoacid dependent dioxygenase of Arabidopsis thaliana (Mouse-ear cress).